Reading from the N-terminus, the 507-residue chain is Arabinose import ATP-binding protein AraG (507 aa).

ABC transporter domains lie at Leu-14 to Arg-249 and Arg-249 to Thr-505. Residue Gly-46 to Ser-53 coordinates ATP.

The protein belongs to the ABC transporter superfamily. Arabinose importer (TC 3.A.1.2.2) family. The complex is composed of two ATP-binding proteins (AraG), two transmembrane proteins (AraH) and a solute-binding protein (AraF).

The protein localises to the cell inner membrane. It carries out the reaction L-arabinose(out) + ATP + H2O = L-arabinose(in) + ADP + phosphate + H(+). Part of the ABC transporter complex AraFGH involved in arabinose import. Responsible for energy coupling to the transport system. The protein is Arabinose import ATP-binding protein AraG of Pseudomonas syringae pv. syringae (strain B728a).